A 367-amino-acid chain; its full sequence is Protein RecA (367 aa).

Positions 1 to 14 are enriched in polar residues; sequence MSTEVNANQSPNAE. The interval 1–24 is disordered; sequence MSTEVNANQSPNAESRQEAARSGE. Residues 15-24 show a composition bias toward basic and acidic residues; it reads SRQEAARSGE. ATP is bound at residue 84–91; that stretch reads GPESSGKT. The disordered stretch occupies residues 348-367; it reads GSEVSSNSMRPLTTANRKAA. Residues 349–367 are compositionally biased toward polar residues; the sequence is SEVSSNSMRPLTTANRKAA.

Belongs to the RecA family.

The protein localises to the cytoplasm. Its function is as follows. Can catalyze the hydrolysis of ATP in the presence of single-stranded DNA, the ATP-dependent uptake of single-stranded DNA by duplex DNA, and the ATP-dependent hybridization of homologous single-stranded DNAs. It interacts with LexA causing its activation and leading to its autocatalytic cleavage. The protein is Protein RecA of Prochlorococcus marinus (strain MIT 9211).